Consider the following 146-residue polypeptide: D-aminoacyl-tRNA deacylase (146 aa).

A Gly-cisPro motif, important for rejection of L-amino acids motif is present at residues 137-138 (GP).

Belongs to the DTD family. In terms of assembly, homodimer.

It localises to the cytoplasm. The catalysed reaction is glycyl-tRNA(Ala) + H2O = tRNA(Ala) + glycine + H(+). The enzyme catalyses a D-aminoacyl-tRNA + H2O = a tRNA + a D-alpha-amino acid + H(+). Its function is as follows. An aminoacyl-tRNA editing enzyme that deacylates mischarged D-aminoacyl-tRNAs. Also deacylates mischarged glycyl-tRNA(Ala), protecting cells against glycine mischarging by AlaRS. Acts via tRNA-based rather than protein-based catalysis; rejects L-amino acids rather than detecting D-amino acids in the active site. By recycling D-aminoacyl-tRNA to D-amino acids and free tRNA molecules, this enzyme counteracts the toxicity associated with the formation of D-aminoacyl-tRNA entities in vivo and helps enforce protein L-homochirality. The chain is D-aminoacyl-tRNA deacylase from Bacillus cereus (strain ATCC 14579 / DSM 31 / CCUG 7414 / JCM 2152 / NBRC 15305 / NCIMB 9373 / NCTC 2599 / NRRL B-3711).